Consider the following 252-residue polypeptide: Phosphate import ATP-binding protein PstB 1 (252 aa).

The ABC transporter domain maps to 6 to 247 (LQIRDLSVYY…PKRKETEDYI (242 aa)). 38–45 (GPSGSGKS) provides a ligand contact to ATP.

It belongs to the ABC transporter superfamily. Phosphate importer (TC 3.A.1.7) family. As to quaternary structure, the complex is composed of two ATP-binding proteins (PstB), two transmembrane proteins (PstC and PstA) and a solute-binding protein (PstS).

It localises to the cell membrane. It carries out the reaction phosphate(out) + ATP + H2O = ADP + 2 phosphate(in) + H(+). Functionally, part of the ABC transporter complex PstSACB involved in phosphate import. Responsible for energy coupling to the transport system. The chain is Phosphate import ATP-binding protein PstB 1 from Streptococcus pyogenes serotype M1.